We begin with the raw amino-acid sequence, 396 residues long: Elongation factor Tu (396 aa).

One can recognise a tr-type G domain in the interval 10-206 (KPHCNIGTIG…QVDAYIPQPE (197 aa)). A G1 region spans residues 19 to 26 (GHVDHGKT). Residue 19–26 (GHVDHGKT) participates in GTP binding. Thr-26 serves as a coordination point for Mg(2+). A G2 region spans residues 60-64 (GITIS). The interval 81–84 (DCPG) is G3. GTP is bound by residues 81–85 (DCPGH) and 136–139 (NKCD). The tract at residues 136 to 139 (NKCD) is G4. Residues 174–176 (SAL) are G5.

It belongs to the TRAFAC class translation factor GTPase superfamily. Classic translation factor GTPase family. EF-Tu/EF-1A subfamily. As to quaternary structure, monomer.

The protein localises to the cytoplasm. It catalyses the reaction GTP + H2O = GDP + phosphate + H(+). Its function is as follows. GTP hydrolase that promotes the GTP-dependent binding of aminoacyl-tRNA to the A-site of ribosomes during protein biosynthesis. This Rhodopseudomonas palustris (strain ATCC BAA-98 / CGA009) protein is Elongation factor Tu.